Here is a 235-residue protein sequence, read N- to C-terminus: uncharacterized protein (235 aa).

Positions 2–69 (CRLAKIISNA…KPRLWIYYKP (68 aa)) constitute an S4 RNA-binding domain. Residue D102 is the Nucleophile of the active site.

The protein belongs to the pseudouridine synthase RsuA family.

It carries out the reaction a uridine in RNA = a pseudouridine in RNA. This is an uncharacterized protein from Rickettsia prowazekii (strain Madrid E).